Reading from the N-terminus, the 527-residue chain is MTGRGQPPKKNDTYDYPRKQPPKNGSYDNYDYPTSTKTRSTNKQRKDSNYPPRETIFEPDLAADPIYSVPRPPSRVPHKLVKVNYKSNLVPITASNSVSELLSLHDETQVTECVEAPLIAKSPDITVYEKMFSVRPKHTLTKLEGKQKMFTRKKKGSFVKIGSNMLEFGESLKSKLHNDSKKSPDEPDGLVHVPVHLLYPPKHQDPVPAFFIFLEGSIGVGKTTLLKSMNGILGGKNVLAFHEPIAYWTDVFSNSLEEVYKLTLPAKVGRTSNSAKLLACQLKFASPLLALKTATDRLSSPKNSLLSSDMWVMFDRHPLSATVVFPYMHFQNGFLSFSHLIQLWSSFKASRGDNIILLNLNSQENLKRVKKRNRKEEKSVSIEHIRLLNNCYHAVYCAWLLVQNFTPEEIVEVCFNAKHITDLSSSKPSFLAKHVSTEDMLKSSIFNTWIEMTKAHRDSCTLMECLLTFCKELEKVQLIHVNVSPFTDDIPGLWASIYTSIRRNSAIKPNRVNWLALEDLARTFNSQ.

Residues 1 to 57 (MTGRGQPPKKNDTYDYPRKQPPKNGSYDNYDYPTSTKTRSTNKQRKDSNYPPRETIF) form a disordered region. The segment covering 9 to 18 (KKNDTYDYPR) has biased composition (basic and acidic residues). Over residues 32-41 (YPTSTKTRST) the composition is skewed to polar residues. 216–223 (GSIGVGKT) lines the ATP pocket. E243 functions as the Proton acceptor in the catalytic mechanism. The substrate site is built by Y260 and Q281. R368 serves as a coordination point for ATP. R374 provides a ligand contact to substrate.

This sequence belongs to the herpesviridae thymidine kinase family. Homodimer.

It catalyses the reaction thymidine + ATP = dTMP + ADP + H(+). Catalyzes the transfer of the gamma-phospho group of ATP to thymidine to generate dTMP in the salvage pathway of pyrimidine synthesis. The dTMP serves as a substrate for DNA polymerase during viral DNA replication. Allows the virus to be reactivated and to grow in non-proliferative cells lacking a high concentration of phosphorylated nucleic acid precursors. This Saimiriine herpesvirus 2 (strain 11) (SaHV-2) protein is Thymidine kinase.